The chain runs to 250 residues: Zinc finger protein lsy-27 (250 aa).

C2H2-type zinc fingers lie at residues 25 to 48 (FVCS…QLMH) and 52 to 75 (HTCM…RNEH). The C2H2-type 3; degenerate zinc-finger motif lies at 81–104 (FTCGCCNWTFASKRQLTEHTKCIQ). 2 disordered regions span residues 126–177 (IQST…EAER) and 226–250 (QKVK…QEIE). Over residues 148–165 (SLSPSSSVSTSISSRDAS) the composition is skewed to low complexity. Residues 239-250 (MIPEKHVKQEIE) show a composition bias toward basic and acidic residues.

In terms of biological role, involved in regulating left/right asymmetric differentiation of the gustatory ASE neurons. Plays a role in modulating expression of LIM/homeobox protein lim-6. The polypeptide is Zinc finger protein lsy-27 (Caenorhabditis elegans).